Consider the following 331-residue polypeptide: Biotin synthase (331 aa).

The Radical SAM core domain occupies 52–277; sequence PDVEVEGIIS…RTMLRFAGGR (226 aa). [4Fe-4S] cluster is bound by residues cysteine 67, cysteine 71, and cysteine 74. [2Fe-2S] cluster is bound by residues cysteine 110, cysteine 143, cysteine 202, and arginine 272.

The protein belongs to the radical SAM superfamily. Biotin synthase family. Homodimer. It depends on [4Fe-4S] cluster as a cofactor. [2Fe-2S] cluster is required as a cofactor.

It catalyses the reaction (4R,5S)-dethiobiotin + (sulfur carrier)-SH + 2 reduced [2Fe-2S]-[ferredoxin] + 2 S-adenosyl-L-methionine = (sulfur carrier)-H + biotin + 2 5'-deoxyadenosine + 2 L-methionine + 2 oxidized [2Fe-2S]-[ferredoxin]. Its pathway is cofactor biosynthesis; biotin biosynthesis; biotin from 7,8-diaminononanoate: step 2/2. Catalyzes the conversion of dethiobiotin (DTB) to biotin by the insertion of a sulfur atom into dethiobiotin via a radical-based mechanism. This Mycobacterium sp. (strain JLS) protein is Biotin synthase.